We begin with the raw amino-acid sequence, 287 residues long: Probable ribosomal RNA small subunit methyltransferase A (287 aa).

S-adenosyl-L-methionine contacts are provided by H29, L31, G56, E77, D102, and N117.

This sequence belongs to the class I-like SAM-binding methyltransferase superfamily. rRNA adenine N(6)-methyltransferase family. RsmA subfamily.

The protein resides in the cytoplasm. Its function is as follows. Specifically dimethylates two adjacent adenosines in the loop of a conserved hairpin near the 3'-end of 16S rRNA in the 30S particle. May play a critical role in biogenesis of 30S subunits. The sequence is that of Probable ribosomal RNA small subunit methyltransferase A from Methanosarcina barkeri (strain Fusaro / DSM 804).